Here is a 247-residue protein sequence, read N- to C-terminus: Flavin-dependent thymidylate synthase (247 aa).

The 237-residue stretch at 1–237 (MDVKLLEATD…PKTFEYYEQE (237 aa)) folds into the ThyX domain. Residues 85–88 (QITR), 98–100 (SMR), and R176 each bind dUMP. 88–90 (RHR) is a binding site for FAD. Positions 88–98 (RHRHVSFDVQS) match the ThyX motif motif. Residues 192–194 (NAR) and H198 each bind FAD. R203 lines the dUMP pocket. R203 functions as the Involved in ionization of N3 of dUMP, leading to its activation in the catalytic mechanism.

Belongs to the thymidylate synthase ThyX family. As to quaternary structure, homotetramer. The cofactor is FAD.

The catalysed reaction is dUMP + (6R)-5,10-methylene-5,6,7,8-tetrahydrofolate + NADPH + H(+) = dTMP + (6S)-5,6,7,8-tetrahydrofolate + NADP(+). It participates in pyrimidine metabolism; dTTP biosynthesis. Functionally, catalyzes the reductive methylation of 2'-deoxyuridine-5'-monophosphate (dUMP) to 2'-deoxythymidine-5'-monophosphate (dTMP) while utilizing 5,10-methylenetetrahydrofolate (mTHF) as the methyl donor, and NADPH and FADH(2) as the reductant. In Haloarcula marismortui (strain ATCC 43049 / DSM 3752 / JCM 8966 / VKM B-1809) (Halobacterium marismortui), this protein is Flavin-dependent thymidylate synthase.